A 155-amino-acid polypeptide reads, in one-letter code: MPEASSPFPDGIVLGFDVGTRRIGVAVGSAWGAGARAVAVIDVHGVAVDWNALDRVKRNWLPVGLVVGDPLTLEGHDQPIRKQAHAFACQLRERYRLPVVLVDERSSSVEAASRFAGARAAGYKRRRDADTLDAIAAAVILERWLADPMQATSLP.

It belongs to the YqgF nuclease family.

It is found in the cytoplasm. Its function is as follows. Could be a nuclease involved in processing of the 5'-end of pre-16S rRNA. The chain is Putative pre-16S rRNA nuclease from Xylella fastidiosa (strain M12).